A 447-amino-acid chain; its full sequence is Na(+)-translocating NADH-quinone reductase subunit A (447 aa).

This sequence belongs to the NqrA family. As to quaternary structure, composed of six subunits; NqrA, NqrB, NqrC, NqrD, NqrE and NqrF.

It carries out the reaction a ubiquinone + n Na(+)(in) + NADH + H(+) = a ubiquinol + n Na(+)(out) + NAD(+). NQR complex catalyzes the reduction of ubiquinone-1 to ubiquinol by two successive reactions, coupled with the transport of Na(+) ions from the cytoplasm to the periplasm. NqrA to NqrE are probably involved in the second step, the conversion of ubisemiquinone to ubiquinol. This Haemophilus influenzae (strain 86-028NP) protein is Na(+)-translocating NADH-quinone reductase subunit A.